A 141-amino-acid polypeptide reads, in one-letter code: Large ribosomal subunit protein uL11 (141 aa).

The protein belongs to the universal ribosomal protein uL11 family. In terms of assembly, part of the ribosomal stalk of the 50S ribosomal subunit. Interacts with L10 and the large rRNA to form the base of the stalk. L10 forms an elongated spine to which L12 dimers bind in a sequential fashion forming a multimeric L10(L12)X complex. Post-translationally, one or more lysine residues are methylated.

Its function is as follows. Forms part of the ribosomal stalk which helps the ribosome interact with GTP-bound translation factors. The chain is Large ribosomal subunit protein uL11 from Trichlorobacter lovleyi (strain ATCC BAA-1151 / DSM 17278 / SZ) (Geobacter lovleyi).